Here is a 339-residue protein sequence, read N- to C-terminus: Glyceraldehyde-3-phosphate dehydrogenase (339 aa).

Residues 11 to 12 and glycine 110 each bind NAD(+); that span reads TI. Residue 139–141 coordinates D-glyceraldehyde 3-phosphate; it reads SCN. Cysteine 140 (nucleophile) is an active-site residue. Residue arginine 168 participates in NAD(+) binding. Residue 194 to 195 participates in D-glyceraldehyde 3-phosphate binding; it reads HG. An NAD(+)-binding site is contributed by glutamine 301.

It belongs to the glyceraldehyde-3-phosphate dehydrogenase family. Homotetramer.

It localises to the cytoplasm. It carries out the reaction D-glyceraldehyde 3-phosphate + phosphate + NADP(+) = (2R)-3-phospho-glyceroyl phosphate + NADPH + H(+). The enzyme catalyses D-glyceraldehyde 3-phosphate + phosphate + NAD(+) = (2R)-3-phospho-glyceroyl phosphate + NADH + H(+). It functions in the pathway carbohydrate degradation; glycolysis; pyruvate from D-glyceraldehyde 3-phosphate: step 1/5. In Methanospirillum hungatei JF-1 (strain ATCC 27890 / DSM 864 / NBRC 100397 / JF-1), this protein is Glyceraldehyde-3-phosphate dehydrogenase.